The sequence spans 707 residues: Protein kinase C-like 1B (707 aa).

A C2 domain is found at 1-114; that stretch reads MLFTGTVRVR…KIGSANDIWV (114 aa). Phorbol-ester/DAG-type zinc fingers lie at residues 170–220 and 248–298; these read GHKF…VWKC and PHRF…ANNC. A disordered region spans residues 323–368; it reads SKKKPSIMTDTSTDISGSSNSENSGYLQQISEDDSGTTSSRSASKV. The segment covering 330–365 has biased composition (polar residues); sequence MTDTSTDISGSSNSENSGYLQQISEDDSGTTSSRSA. The Protein kinase domain occupies 378-638; the sequence is FTFMKVLGKG…EDAIRAHPFF (261 aa). ATP contacts are provided by residues 384 to 392 and lysine 407; that span reads LGKGSFGKV. Aspartate 502 acts as the Proton acceptor in catalysis. Positions 639–707 constitute an AGC-kinase C-terminal domain; the sequence is REIDWDALES…FSFINPHFTY (69 aa).

This sequence belongs to the protein kinase superfamily. AGC Ser/Thr protein kinase family. PKC subfamily. Expressed selectively in neurons that receive, transmit and process environmental signals.

It is found in the membrane. It localises to the cytoplasm. Its subcellular location is the cytoskeleton. The catalysed reaction is L-seryl-[protein] + ATP = O-phospho-L-seryl-[protein] + ADP + H(+). It carries out the reaction L-threonyl-[protein] + ATP = O-phospho-L-threonyl-[protein] + ADP + H(+). Functionally, PKC is activated by diacylglycerol which in turn phosphorylates a range of cellular proteins. PKC also serves as the receptor for phorbol esters, a class of tumor promoters. Involved in neuropeptide secretion in motor axons. Likely to act via the extracellular signal-regulated kinase/mitogen-activated protein kinase (ERK/MAPK) pathway in the signaling response to various sensory neurons; temperature, odor, taste, and osmolality. Its role in regulation differs depending on the neuron in which it is acting; thermosensation in AFD neurons, osmolality in ASH neurons, olfactory perception in AWA and AWC neurons. Promotes dauer formation mediated by the insulin/IGF pathway. Required for resistance to antimitotic toxins. The polypeptide is Protein kinase C-like 1B (Caenorhabditis elegans).